Reading from the N-terminus, the 132-residue chain is Peptide methionine sulfoxide reductase MsrB (132 aa).

A MsrB domain is found at 8 to 130 (LDSWREELTE…NSASLKLVPR (123 aa)). Zn(2+) is bound by residues cysteine 47, cysteine 50, cysteine 96, and cysteine 99. Cysteine 119 acts as the Nucleophile in catalysis.

It belongs to the MsrB Met sulfoxide reductase family. Zn(2+) serves as cofactor.

It catalyses the reaction L-methionyl-[protein] + [thioredoxin]-disulfide + H2O = L-methionyl-(R)-S-oxide-[protein] + [thioredoxin]-dithiol. The protein is Peptide methionine sulfoxide reductase MsrB of Pseudomonas paraeruginosa (strain DSM 24068 / PA7) (Pseudomonas aeruginosa (strain PA7)).